The sequence spans 715 residues: Fatty acid oxidation complex subunit alpha (715 aa).

An enoyl-CoA hydratase/isomerase region spans residues Met-1–Ala-189. Asp-296 contributes to the substrate binding site. The segment at Ala-311–Tyr-715 is 3-hydroxyacyl-CoA dehydrogenase. NAD(+)-binding positions include Met-325, Asp-344, Val-401 to Glu-403, Lys-408, and Ser-430. His-451 functions as the For 3-hydroxyacyl-CoA dehydrogenase activity in the catalytic mechanism. Asn-454 contributes to the NAD(+) binding site. Substrate contacts are provided by Asn-501 and Tyr-661.

In the N-terminal section; belongs to the enoyl-CoA hydratase/isomerase family. It in the C-terminal section; belongs to the 3-hydroxyacyl-CoA dehydrogenase family. Heterotetramer of two alpha chains (FadB) and two beta chains (FadA).

It carries out the reaction a (3S)-3-hydroxyacyl-CoA + NAD(+) = a 3-oxoacyl-CoA + NADH + H(+). The enzyme catalyses a (3S)-3-hydroxyacyl-CoA = a (2E)-enoyl-CoA + H2O. The catalysed reaction is a 4-saturated-(3S)-3-hydroxyacyl-CoA = a (3E)-enoyl-CoA + H2O. It catalyses the reaction (3S)-3-hydroxybutanoyl-CoA = (3R)-3-hydroxybutanoyl-CoA. It carries out the reaction a (3Z)-enoyl-CoA = a 4-saturated (2E)-enoyl-CoA. The enzyme catalyses a (3E)-enoyl-CoA = a 4-saturated (2E)-enoyl-CoA. It participates in lipid metabolism; fatty acid beta-oxidation. In terms of biological role, involved in the aerobic and anaerobic degradation of long-chain fatty acids via beta-oxidation cycle. Catalyzes the formation of 3-oxoacyl-CoA from enoyl-CoA via L-3-hydroxyacyl-CoA. It can also use D-3-hydroxyacyl-CoA and cis-3-enoyl-CoA as substrate. The protein is Fatty acid oxidation complex subunit alpha of Aeromonas salmonicida (strain A449).